Consider the following 219-residue polypeptide: Probable nicotinate-nucleotide adenylyltransferase (219 aa).

It belongs to the NadD family.

It carries out the reaction nicotinate beta-D-ribonucleotide + ATP + H(+) = deamido-NAD(+) + diphosphate. The protein operates within cofactor biosynthesis; NAD(+) biosynthesis; deamido-NAD(+) from nicotinate D-ribonucleotide: step 1/1. Functionally, catalyzes the reversible adenylation of nicotinate mononucleotide (NaMN) to nicotinic acid adenine dinucleotide (NaAD). The sequence is that of Probable nicotinate-nucleotide adenylyltransferase from Pseudomonas entomophila (strain L48).